Here is a 589-residue protein sequence, read N- to C-terminus: Mini-chromosome maintenance complex-binding protein (589 aa).

The tract at residues 163 to 211 (VDEEMTDSMDSSTLEAGRNGSPFKKMKVGEATSSASESQVPQTSGIPPA) is disordered. Positions 193–207 (ATSSASESQVPQTSG) are enriched in polar residues.

The protein belongs to the MCMBP family. In terms of assembly, interacts with the MCM complex.

The protein resides in the nucleus. In terms of biological role, associated component of the MCM complex that acts as a regulator of DNA replication. Binds to the MCM complex during late S phase and may act by promoting the disassembly of the MCM complex from chromatin. Required for sister chromatid cohesion. The protein is Mini-chromosome maintenance complex-binding protein (ETG1) of Arabidopsis thaliana (Mouse-ear cress).